The following is a 449-amino-acid chain: Chromosomal replication initiator protein DnaA (449 aa).

The interval 1–75 (MDTNNDIEKR…EILSQNKVGM (75 aa)) is domain I, interacts with DnaA modulators. Residues 75–106 (MHLAHSVDVRIEVASKVHVSDHSNINYKATKS) form a domain II region. Positions 107–321 (SIKDSYTFEN…GAIIKISVNA (215 aa)) are domain III, AAA+ region. Positions 151, 153, 154, and 155 each coordinate ATP. The interval 322-449 (NLMNAPIDLN…LNELNDKKQH (128 aa)) is domain IV, binds dsDNA.

This sequence belongs to the DnaA family. Oligomerizes as a right-handed, spiral filament on DNA at oriC.

Its subcellular location is the cytoplasm. Plays an essential role in the initiation and regulation of chromosomal replication. ATP-DnaA binds to the origin of replication (oriC) to initiate formation of the DNA replication initiation complex once per cell cycle. Binds the DnaA box (a 9 base pair repeat at the origin) and separates the double-stranded (ds)DNA. Forms a right-handed helical filament on oriC DNA; dsDNA binds to the exterior of the filament while single-stranded (ss)DNA is stabiized in the filament's interior. The ATP-DnaA-oriC complex binds and stabilizes one strand of the AT-rich DNA unwinding element (DUE), permitting loading of DNA polymerase. After initiation quickly degrades to an ADP-DnaA complex that is not apt for DNA replication. Binds acidic phospholipids. The polypeptide is Chromosomal replication initiator protein DnaA (Helicobacter acinonychis (strain Sheeba)).